A 190-amino-acid chain; its full sequence is uncharacterized protein (190 aa).

The 58-residue stretch at Met1 to Met58 folds into the HTH tetR-type domain. The H-T-H motif DNA-binding region spans Thr21–Tyr40.

This is an uncharacterized protein from Bacillus subtilis (strain 168).